The sequence spans 117 residues: Large ribosomal subunit protein uL18 (117 aa).

This sequence belongs to the universal ribosomal protein uL18 family. Part of the 50S ribosomal subunit; part of the 5S rRNA/L5/L18/L25 subcomplex. Contacts the 5S and 23S rRNAs.

Its function is as follows. This is one of the proteins that bind and probably mediate the attachment of the 5S RNA into the large ribosomal subunit, where it forms part of the central protuberance. The polypeptide is Large ribosomal subunit protein uL18 (Blochmanniella floridana).